The primary structure comprises 489 residues: MTHPAQFINGQWSQGQGTEFSSVNPANNNVIFQANSATAEQVDAAVSAAREAFYAWADKTFAERLEIVKAFAAQLKENSEELAITIAQETGKPLWETRTEAGAMVGKIAISEKAFLERTGDVENAMPLGRAMIRHKPHGVVAVFGPYNFPGHLPNGHIVPALLAGNTVIFKPSELTPKVAELTLKLWEKAGLPAGVINLVQGEVATGKALAAHKGIDGLFFTGSSRTGHILHEQFAGQPGKILALEMGGNNPLIITDVEDTKAVVHDIIQSAFISSGQRCTCARKLFLPTGSKGDVILERLITATKAIKVGNYDDADQPFMGSMISSAAAAGMVKAQNELVELGAQVLVELEHTVNTGFVTPGIIECTNISDFPDEEHFGPLLKVFRFDDFDQAIDKANDTSFGLSAGLLSDSAADYEHFLRRIRAGIVNWNRPITGASSAAPFGGIGASGNHRASAYYAADYCAYPVASVELEKVAMPATLSPGLKID.

G223 to G228 provides a ligand contact to NAD(+). Active-site residues include E246 and C280.

This sequence belongs to the aldehyde dehydrogenase family. AstD subfamily.

The catalysed reaction is N-succinyl-L-glutamate 5-semialdehyde + NAD(+) + H2O = N-succinyl-L-glutamate + NADH + 2 H(+). The protein operates within amino-acid degradation; L-arginine degradation via AST pathway; L-glutamate and succinate from L-arginine: step 4/5. Catalyzes the NAD-dependent reduction of succinylglutamate semialdehyde into succinylglutamate. In Pseudoalteromonas translucida (strain TAC 125), this protein is N-succinylglutamate 5-semialdehyde dehydrogenase 1.